The following is a 488-amino-acid chain: Bifunctional protein HldE (488 aa).

The ribokinase stretch occupies residues 1–327 (MDDTLAKLPR…GLAHGEHADP (327 aa)). An ATP-binding site is contributed by 201-204 (NRRE). Aspartate 272 is a catalytic residue. The interval 354 to 488 (FTNGCFDLLH…GRMNAPAVGG (135 aa)) is cytidylyltransferase.

This sequence in the N-terminal section; belongs to the carbohydrate kinase PfkB family. The protein in the C-terminal section; belongs to the cytidylyltransferase family. As to quaternary structure, homodimer.

The enzyme catalyses D-glycero-beta-D-manno-heptose 7-phosphate + ATP = D-glycero-beta-D-manno-heptose 1,7-bisphosphate + ADP + H(+). The catalysed reaction is D-glycero-beta-D-manno-heptose 1-phosphate + ATP + H(+) = ADP-D-glycero-beta-D-manno-heptose + diphosphate. Its pathway is nucleotide-sugar biosynthesis; ADP-L-glycero-beta-D-manno-heptose biosynthesis; ADP-L-glycero-beta-D-manno-heptose from D-glycero-beta-D-manno-heptose 7-phosphate: step 1/4. The protein operates within nucleotide-sugar biosynthesis; ADP-L-glycero-beta-D-manno-heptose biosynthesis; ADP-L-glycero-beta-D-manno-heptose from D-glycero-beta-D-manno-heptose 7-phosphate: step 3/4. Catalyzes the phosphorylation of D-glycero-D-manno-heptose 7-phosphate at the C-1 position to selectively form D-glycero-beta-D-manno-heptose-1,7-bisphosphate. Functionally, catalyzes the ADP transfer from ATP to D-glycero-beta-D-manno-heptose 1-phosphate, yielding ADP-D-glycero-beta-D-manno-heptose. The polypeptide is Bifunctional protein HldE (Caulobacter sp. (strain K31)).